A 131-amino-acid chain; its full sequence is DNA-directed RNA polymerase subunit Rpo8 (131 aa).

Belongs to the archaeal Rpo8 RNA polymerase subunit family. As to quaternary structure, part of the 13-subunit RNA polymerase complex. Interacts with Rpo1N on the periphery of the clamp head.

The protein resides in the cytoplasm. The enzyme catalyses RNA(n) + a ribonucleoside 5'-triphosphate = RNA(n+1) + diphosphate. In terms of biological role, DNA-dependent RNA polymerase (RNAP) catalyzes the transcription of DNA into RNA using the four ribonucleoside triphosphates as substrates. This is DNA-directed RNA polymerase subunit Rpo8 from Saccharolobus shibatae (strain ATCC 51178 / DSM 5389 / JCM 8931 / NBRC 15437 / B12) (Sulfolobus shibatae).